Reading from the N-terminus, the 227-residue chain is MENLKKMAGITAAEFIKDGMVVGLGTGSTAYYFVEEIGRRIKEEGLQITAVTTSSVTSKQAEGLNIPLKSIDQVDFVDVTVDGADEVDSQFNGIKGGGGALLMEKVVATPSKEYIWVVDESKLVEKLGAFKLPVEVVQYGAEQVFRHFERAGYKPSFREKDGQRFVTDMQNFIIDLALDVIENPIAFGQELDHVVGVVEHGLFNQMVDKVIVAGRDGVQISTSKKGK.

Substrate is bound by residues 26–29 (TGST), 82–85 (DGAD), and 95–98 (KGGG). Residue E104 is the Proton acceptor of the active site. Position 122 (K122) interacts with substrate.

Belongs to the ribose 5-phosphate isomerase family. Homodimer.

The catalysed reaction is aldehydo-D-ribose 5-phosphate = D-ribulose 5-phosphate. It participates in carbohydrate degradation; pentose phosphate pathway; D-ribose 5-phosphate from D-ribulose 5-phosphate (non-oxidative stage): step 1/1. Catalyzes the reversible conversion of ribose-5-phosphate to ribulose 5-phosphate. The polypeptide is Ribose-5-phosphate isomerase A (Streptococcus pneumoniae serotype 4 (strain ATCC BAA-334 / TIGR4)).